The sequence spans 259 residues: Zinc import ATP-binding protein ZnuC (259 aa).

Positions 6–223 constitute an ABC transporter domain; the sequence is VTVQSVSVTL…PAYHELFGPG (218 aa). An ATP-binding site is contributed by 38-45; it reads GPNGAGKS. Residues 230–259 form a disordered region; sequence ALYTHDHDHDHDLHGNATHSHDHNGPCNHD. A compositionally biased stretch (basic and acidic residues) spans 233–259; the sequence is THDHDHDHDLHGNATHSHDHNGPCNHD.

Belongs to the ABC transporter superfamily. Zinc importer (TC 3.A.1.15.5) family. In terms of assembly, the complex is composed of two ATP-binding proteins (ZnuC), two transmembrane proteins (ZnuB) and a solute-binding protein (ZnuA).

The protein resides in the cell inner membrane. The catalysed reaction is Zn(2+)(out) + ATP(in) + H2O(in) = Zn(2+)(in) + ADP(in) + phosphate(in) + H(+)(in). Its function is as follows. Part of the ABC transporter complex ZnuABC involved in zinc import. Responsible for energy coupling to the transport system. This chain is Zinc import ATP-binding protein ZnuC, found in Alcanivorax borkumensis (strain ATCC 700651 / DSM 11573 / NCIMB 13689 / SK2).